A 1290-amino-acid chain; its full sequence is Vacuolating cytotoxin autotransporter (1290 aa).

Positions 1–33 are cleaved as a signal peptide; the sequence is MEIQQTHRKINRPLVSLALVGALVSITPQQSHA. The disordered stretch occupies residues 326–374; the sequence is PPEGGYKDKPKDKPSNTTQNNANNNQQNSAQNNSNTQVINPPNSAQKTE. The span at 330–339 shows a compositional bias: basic and acidic residues; it reads GYKDKPKDKP. The segment covering 340 to 362 has biased composition (low complexity); that stretch reads SNTTQNNANNNQQNSAQNNSNTQ. The span at 363–374 shows a compositional bias: polar residues; it reads VINPPNSAQKTE. An Autotransporter domain is found at 1018–1290; that stretch reads KYEKPTNVWA…ASNLGMRYSF (273 aa).

The protein localises to the periplasm. It localises to the secreted. Its subcellular location is the cell surface. It is found in the cell outer membrane. Its function is as follows. Induces vacuolation of eukaryotic cells. Causes ulceration and gastric lesions. The chain is Vacuolating cytotoxin autotransporter (vacA) from Helicobacter pylori (strain ATCC 700392 / 26695) (Campylobacter pylori).